Reading from the N-terminus, the 327-residue chain is Altered inheritance rate of mitochondria protein 25 (327 aa).

It belongs to the phospholipid scramblase family.

The protein resides in the mitochondrion. In Saccharomyces cerevisiae (strain ATCC 204508 / S288c) (Baker's yeast), this protein is Altered inheritance rate of mitochondria protein 25 (AIM25).